The sequence spans 473 residues: Sphingosine kinase 1 (473 aa).

Positions Q83–N233 constitute a DAGKc domain. ATP is bound by residues N93–N95 and T125–N129. S151–G154 contacts substrate. The Proton donor/acceptor role is filled by D153. ATP-binding positions include E158 and G184–G186. D251 is a binding site for substrate. Residues R258, R265, and D448–E450 each bind ATP.

Mg(2+) serves as cofactor. In terms of tissue distribution, expressed in the majority of cholinergic and GABAergic neurons, body wall muscle, excretory canal cells, intestine, and hypodermis.

The protein resides in the presynaptic cell membrane. Its subcellular location is the cell projection. The protein localises to the axon. It is found in the perikaryon. It localises to the mitochondrion membrane. The catalysed reaction is a sphingoid base + ATP = a sphingoid 1-phosphate + ADP + H(+). The enzyme catalyses 15-methylhexadecasphing-4-enine + ATP = 15-methylhexadecasphing-4-enine 1-phosphate + ADP + H(+). It carries out the reaction 15-methylhexadecasphinganine + ATP = 15-methylhexadecasphinganine 1-phosphate + ADP + H(+). It participates in lipid metabolism; sphingolipid metabolism. In terms of biological role, catalyzes the phosphorylation of sphingoid bases to form sphingoid 1-phosphate (SPP), which have both intra- and extracellular functions. C.elegans contain specific sphingoid bases, which are unique or different in structure compared to the sphingoid bases found in other animals. Two examples of these distinctive compounds are: 15-methylhexadecasphinganine and 15-methylhexadecasphing-4-enine. Required for neurotransmitter release from neuromuscular junctions. Acts by recruiting the synaptic vesicle priming protein unc-13 to synapses. This chain is Sphingosine kinase 1 (sphk-1), found in Caenorhabditis elegans.